The following is a 321-amino-acid chain: Beta-1,3-N-acetylglucosaminyltransferase manic fringe (321 aa).

Over 1 to 7 (MQCRLPR) the chain is Cytoplasmic. The chain crosses the membrane as a helical; Signal-anchor for type II membrane protein span at residues 8–27 (GLAGALLTLLCMGLLCLRYH). Residues 28–321 (LNLSPQRVQG…TPWCPQLGAR (294 aa)) lie on the Lumenal side of the membrane. Arg-70 contacts substrate. An N-linked (GlcNAc...) asparagine glycan is attached at Asn-109. 2 disulfides stabilise this stretch: Cys-110–Cys-121 and Cys-139–Cys-202. Asp-143 is a binding site for substrate. Asp-144 serves as a coordination point for Mn(2+). An N-linked (GlcNAc...) asparagine glycan is attached at Asn-185. The active site involves Asp-232. His-256 lines the Mn(2+) pocket. The cysteines at positions 306 and 315 are disulfide-linked.

The protein belongs to the glycosyltransferase 31 family. Requires Mn(2+) as cofactor.

Its subcellular location is the golgi apparatus membrane. It carries out the reaction 3-O-(alpha-L-fucosyl)-L-threonyl-[EGF-like domain protein] + UDP-N-acetyl-alpha-D-glucosamine = 3-O-(N-acetyl-beta-D-glucosaminyl-(1-&gt;3)-alpha-L-fucosyl)-L-threonyl-[EGF-like domain protein] + UDP + H(+). The enzyme catalyses 3-O-(alpha-L-fucosyl)-L-seryl-[EGF-like domain protein] + UDP-N-acetyl-alpha-D-glucosamine = 3-O-(N-acetyl-beta-D-glucosaminyl-(1-&gt;3)-alpha-L-fucosyl)-L-seryl-[EGF-like domain protein] + UDP + H(+). Glycosyltransferase that initiates the elongation of O-linked fucose residues attached to EGF-like repeats in the extracellular domain of Notch molecules. Modulates NOTCH1 activity by modifying O-fucose residues at specific EGF-like domains resulting in inhibition of NOTCH1 activation by JAG1 and enhancement of NOTCH1 activation by DLL1 via an increase in its binding to DLL1. In Homo sapiens (Human), this protein is Beta-1,3-N-acetylglucosaminyltransferase manic fringe.